The primary structure comprises 429 residues: Gamma-glutamyl phosphate reductase (429 aa).

It belongs to the gamma-glutamyl phosphate reductase family.

The protein resides in the cytoplasm. It catalyses the reaction L-glutamate 5-semialdehyde + phosphate + NADP(+) = L-glutamyl 5-phosphate + NADPH + H(+). The protein operates within amino-acid biosynthesis; L-proline biosynthesis; L-glutamate 5-semialdehyde from L-glutamate: step 2/2. Its function is as follows. Catalyzes the NADPH-dependent reduction of L-glutamate 5-phosphate into L-glutamate 5-semialdehyde and phosphate. The product spontaneously undergoes cyclization to form 1-pyrroline-5-carboxylate. In Sphingopyxis alaskensis (strain DSM 13593 / LMG 18877 / RB2256) (Sphingomonas alaskensis), this protein is Gamma-glutamyl phosphate reductase.